A 273-amino-acid chain; its full sequence is uncharacterized protein (273 aa).

Belongs to the PhyH family.

This is an uncharacterized protein from Mycobacterium tuberculosis (strain ATCC 25618 / H37Rv).